Consider the following 50-residue polypeptide: Large ribosomal subunit protein eL39 (50 aa).

The protein belongs to the eukaryotic ribosomal protein eL39 family.

The sequence is that of Large ribosomal subunit protein eL39 (rpl39e) from Archaeoglobus fulgidus (strain ATCC 49558 / DSM 4304 / JCM 9628 / NBRC 100126 / VC-16).